A 1158-amino-acid polypeptide reads, in one-letter code: Protein transport protein Sec31B (1158 aa).

7 WD repeats span residues 4–47 (KELE…EIFE), 65–110 (VSSR…SSGK), 119–159 (KHTG…VPMT), 166–206 (NPPE…PIIK), 209–254 (SHSS…SPLK), 258–298 (SHSR…VVYK), and 301–341 (TQSS…WEAQ). A WD 8; interaction with SEC13 repeat occupies 376 to 407 (SFAFGGKLVTFGLPSIPVQPVAQACSRPVFIS). 3 disordered regions span residues 485 to 520 (LKSD…HTAK), 797 to 843 (TSSY…SSDH), and 968 to 1010 (GPQD…PEPQ). A compositionally biased stretch (low complexity) spans 822–840 (QPSSVMPFSPSQPSPSQGS).

It belongs to the WD repeat SEC31 family. COPII is composed of at least 5 proteins: the SEC23/24 complex, the SEC13/31 complex and SAR1. SEC13 and SEC31 make a 2:2 tetramer that forms the edge element of the COPII outer coat. The tetramer self-assembles in multiple copies to form the complete polyhedral cage. Interacts (via WD 8) with SEC13. Interacts with SEC31A. Monoubiquitinated by the BCR(KLHL12) E3 ubiquitin ligase complex, leading to regulate the size of COPII coats.

Its subcellular location is the cytoplasm. It localises to the cytoplasmic vesicle. The protein localises to the COPII-coated vesicle membrane. It is found in the endoplasmic reticulum membrane. In terms of biological role, as a component of the coat protein complex II (COPII), may function in vesicle budding and cargo export from the endoplasmic reticulum. In Mus musculus (Mouse), this protein is Protein transport protein Sec31B (Sec31b).